The sequence spans 428 residues: D-inositol 3-phosphate glycosyltransferase (428 aa).

H5 provides a ligand contact to 1D-myo-inositol 3-phosphate. Residues 11 to 12 and G19 each bind UDP-N-acetyl-alpha-D-glucosamine; that span reads QP. Residues 16 to 21, K74, Y107, T131, and R151 each bind 1D-myo-inositol 3-phosphate; that span reads DAGGMN. Residues R225, K230, and Q283 each contribute to the UDP-N-acetyl-alpha-D-glucosamine site. Positions 292, 293, and 295 each coordinate Mg(2+). UDP-N-acetyl-alpha-D-glucosamine is bound by residues E305 and E313. T319 provides a ligand contact to Mg(2+).

Belongs to the glycosyltransferase group 1 family. MshA subfamily. In terms of assembly, homodimer.

It carries out the reaction 1D-myo-inositol 3-phosphate + UDP-N-acetyl-alpha-D-glucosamine = 1D-myo-inositol 2-acetamido-2-deoxy-alpha-D-glucopyranoside 3-phosphate + UDP + H(+). In terms of biological role, catalyzes the transfer of a N-acetyl-glucosamine moiety to 1D-myo-inositol 3-phosphate to produce 1D-myo-inositol 2-acetamido-2-deoxy-glucopyranoside 3-phosphate in the mycothiol biosynthesis pathway. The polypeptide is D-inositol 3-phosphate glycosyltransferase (Mycobacterium leprae (strain Br4923)).